We begin with the raw amino-acid sequence, 118 residues long: Heavy metal-associated isoprenylated plant protein 47 (118 aa).

Positions 1-67 (MRIKLSVNSE…KACHVTLETL (67 aa)) constitute an HMA domain. The residue at position 115 (Cys115) is a Cysteine methyl ester. Cys115 is lipidated: S-farnesyl cysteine. Residues 116–118 (LVM) constitute a propeptide, removed in mature form.

Belongs to the HIPP family.

Functionally, heavy-metal-binding protein. The sequence is that of Heavy metal-associated isoprenylated plant protein 47 from Arabidopsis thaliana (Mouse-ear cress).